The primary structure comprises 188 residues: Phosphoribosylglycinamide formyltransferase (188 aa).

Residue 12-14 coordinates N(1)-(5-phospho-beta-D-ribosyl)glycinamide; the sequence is GSN. (6R)-10-formyltetrahydrofolate-binding positions include lysine 66, 91–94, and asparagine 108; that span reads MRLI. Histidine 110 acts as the Proton donor in catalysis.

It belongs to the GART family.

It catalyses the reaction N(1)-(5-phospho-beta-D-ribosyl)glycinamide + (6R)-10-formyltetrahydrofolate = N(2)-formyl-N(1)-(5-phospho-beta-D-ribosyl)glycinamide + (6S)-5,6,7,8-tetrahydrofolate + H(+). It participates in purine metabolism; IMP biosynthesis via de novo pathway; N(2)-formyl-N(1)-(5-phospho-D-ribosyl)glycinamide from N(1)-(5-phospho-D-ribosyl)glycinamide (10-formyl THF route): step 1/1. Catalyzes the transfer of a formyl group from 10-formyltetrahydrofolate to 5-phospho-ribosyl-glycinamide (GAR), producing 5-phospho-ribosyl-N-formylglycinamide (FGAR) and tetrahydrofolate. The protein is Phosphoribosylglycinamide formyltransferase of Staphylococcus aureus (strain MSSA476).